Reading from the N-terminus, the 829-residue chain is MLMSFNHPYQPYEIQLQLMQCIYGALSSGKKIAILESPTGTGKTLSLLCSSITWLRDNKLHLLSQNLNNGGIAINSSIELSDDDDFSDDEPNWVNESYNSSILDNKLLALNDYEKHLDTIANKHYKIDKNLIGNDNNNNKVKRRKIEHIPVGFEEDEFLPQDYISDSEELEQTKSEALSNEVKALLAKLDSKSNDEQTTSTELLQELNPVKIFFASRTHSQLKQFASQLKLPKFKSSFDEKFVSNERLKYLPLGSRKQLCINKSITSKWKSTEAINDACKELLQSEKGCPYHNKNTSNTLFRDHVFTGVHDIEDILALGESLNVCPYYATRDSITSAEIITLPYQYLLSESTRDSLNIDLSNSIVIVDEAHNLIDTINTIHSSHISLQELKTCQIGLQMYFAKFKSRLNAGNRVNLLKLIKLLDILIEYINKNFKKSGQEISANEIFNNTNADTLNIHKLNQFIKVSKIAYKIDTYLNSLSKESDNENNEESKNKSTPLLFKVASFLSSLTNPNEEGKFFFEKNKSIKYMLLEPSQSFKSILDEARCVILAGGTMEPISDFFDNLFPDIIKDKSVTFACDHVIPDDNLNTYIIEEPKFEFTFDKRQNPELVNKHLFQFFIKLSVNVPPTGGIVAFFPSYSYLQFVIDNWRSNGLFDKLNKIREIFYESKNGSDPLDEYIKVIEARNPAILFAVVGGKLSEGINFQDDLCRAVVMTGLPYPNVMSGELLIKKNHIETKILKNGGSKADVSCATKDFFDTICMKAVNQSVGRAIRHIDDYSNIYLLDQRYSNSKIKDKLSQWVRKRIQPETNLELIMEKSNRTFQTKKTSN.

The Helicase ATP-binding domain maps to M1–N433. Residue S37 to T44 participates in ATP binding. [4Fe-4S] cluster-binding residues include C260, C279, C289, and C325. Residues D368–H371 carry the DEAH box motif.

The protein belongs to the DEAD box helicase family. DEAH subfamily. DDX11/CHL1 sub-subfamily. It depends on [4Fe-4S] cluster as a cofactor.

The protein resides in the nucleus. The catalysed reaction is Couples ATP hydrolysis with the unwinding of duplex DNA at the replication fork by translocating in the 5'-3' direction. This creates two antiparallel DNA single strands (ssDNA). The leading ssDNA polymer is the template for DNA polymerase III holoenzyme which synthesizes a continuous strand.. It catalyses the reaction ATP + H2O = ADP + phosphate + H(+). ATP-dependent DNA helicase important for chromosome transmission and normal cell cycle progression in G(2)/M. May have a role in changing DNA topology to allow the loading of proteins involved in maintaining sister chromatid cohesion in the vicinity of the centromeres. Has a specific role in chromosome segregation during meiosis II. This Vanderwaltozyma polyspora (strain ATCC 22028 / DSM 70294 / BCRC 21397 / CBS 2163 / NBRC 10782 / NRRL Y-8283 / UCD 57-17) (Kluyveromyces polysporus) protein is ATP-dependent DNA helicase CHL1 (CHL1).